The primary structure comprises 205 residues: Small ribosomal subunit protein uS4 (205 aa).

Residues 14–49 (RMGENIWGRPKSPVNRREYGPGQHGQRRKGKMSDFG) are disordered. Positions 94-157 (SRLDAIVYRA…KQLVTVLEAV (64 aa)) constitute an S4 RNA-binding domain.

The protein belongs to the universal ribosomal protein uS4 family. As to quaternary structure, part of the 30S ribosomal subunit. Contacts protein S5. The interaction surface between S4 and S5 is involved in control of translational fidelity.

In terms of biological role, one of the primary rRNA binding proteins, it binds directly to 16S rRNA where it nucleates assembly of the body of the 30S subunit. Functionally, with S5 and S12 plays an important role in translational accuracy. The sequence is that of Small ribosomal subunit protein uS4 from Agrobacterium fabrum (strain C58 / ATCC 33970) (Agrobacterium tumefaciens (strain C58)).